An 86-amino-acid chain; its full sequence is MAHHKGGGSSRNGKDSNPQYLGVKAYGGEKVKPGSIIVRQRGNHFWPGKNVGQGKDFTLFALAEGVVQFEKKGGKKFVSVIPNEQK.

The tract at residues 1 to 21 (MAHHKGGGSSRNGKDSNPQYL) is disordered.

Belongs to the bacterial ribosomal protein bL27 family.

This Coprothermobacter proteolyticus (strain ATCC 35245 / DSM 5265 / OCM 4 / BT) protein is Large ribosomal subunit protein bL27.